Consider the following 452-residue polypeptide: tRNA modification GTPase MnmE (452 aa).

Residues Arg23, Glu80, and Lys119 each contribute to the (6S)-5-formyl-5,6,7,8-tetrahydrofolate site. Residues 215 to 374 (GIWIALVGQP…LQQGLLEMIG (160 aa)) form the TrmE-type G domain. Asn225 is a binding site for K(+). GTP contacts are provided by residues 225–230 (NVGKSS), 244–250 (TEVPGTT), and 269–272 (DTAG). Ser229 provides a ligand contact to Mg(2+). Thr244, Val246, and Thr249 together coordinate K(+). Thr250 provides a ligand contact to Mg(2+). Lys452 lines the (6S)-5-formyl-5,6,7,8-tetrahydrofolate pocket.

It belongs to the TRAFAC class TrmE-Era-EngA-EngB-Septin-like GTPase superfamily. TrmE GTPase family. In terms of assembly, homodimer. Heterotetramer of two MnmE and two MnmG subunits. The cofactor is K(+).

The protein localises to the cytoplasm. Its function is as follows. Exhibits a very high intrinsic GTPase hydrolysis rate. Involved in the addition of a carboxymethylaminomethyl (cmnm) group at the wobble position (U34) of certain tRNAs, forming tRNA-cmnm(5)s(2)U34. The sequence is that of tRNA modification GTPase MnmE from Nitrosospira multiformis (strain ATCC 25196 / NCIMB 11849 / C 71).